The chain runs to 199 residues: Recombination protein RecR (199 aa).

The C4-type zinc-finger motif lies at 58 to 73 (CKKCFNLTSEEECEIC). Residues 81–175 (KIICVVAETK…KVTRIAYGLP (95 aa)) form the Toprim domain.

The protein belongs to the RecR family.

Functionally, may play a role in DNA repair. It seems to be involved in an RecBC-independent recombinational process of DNA repair. It may act with RecF and RecO. This chain is Recombination protein RecR, found in Prochlorococcus marinus subsp. pastoris (strain CCMP1986 / NIES-2087 / MED4).